We begin with the raw amino-acid sequence, 422 residues long: Phosphoglycerate kinase (422 aa).

Substrate is bound by residues 24-26 (DLN), 64-67 (HLGR), Arg-129, and Arg-171. Residues Lys-222, Gly-309, Glu-340, and 370–373 (DIDT) each bind ATP.

Belongs to the phosphoglycerate kinase family. In terms of assembly, monomer.

It localises to the cytoplasm. The catalysed reaction is (2R)-3-phosphoglycerate + ATP = (2R)-3-phospho-glyceroyl phosphate + ADP. It participates in carbohydrate degradation; glycolysis; pyruvate from D-glyceraldehyde 3-phosphate: step 2/5. The sequence is that of Phosphoglycerate kinase (pgk) from Ureaplasma parvum serovar 3 (strain ATCC 700970).